Reading from the N-terminus, the 242-residue chain is Ras-like protein family member 11A (242 aa).

The interval 17 to 241 is small GTPase-like; the sequence is ESSSDYLLPK…SSKAKAASTL (225 aa). GTP contacts are provided by residues 34-41, 81-85, and 147-150; these read GASCVGKS, DTPGG, and NKGD.

Belongs to the small GTPase superfamily. Ras family. As to quaternary structure, interacts with UBF/UBTF.

It is found in the nucleus. It localises to the nucleolus. The enzyme catalyses GTP + H2O = GDP + phosphate + H(+). Its function is as follows. Regulator of rDNA transcription. Acts in cooperation UBF/UBTF and positively regulates RNA polymerase I transcription. This Rattus norvegicus (Rat) protein is Ras-like protein family member 11A.